The primary structure comprises 292 residues: MPELPEVEVVRRGLERHIVGASIDSVDILHPRAIRRHLPGAADLAGQLTGERIASADRRGKYLWLVLEPSTVALVVHLGMSGQMLVQPPELPTEKHLRIRARLDSGLDLRFVDQRTFGGWALAPLVDVDGSLVPDSVAHIARDPLDPRFDLAATVKVVRGKHTEVKRALLDQTVVSGIGNIYADEALWRARIHGNRLTDRLSGPKVREVLTAAQEVMREALTQGGTSFDALYVNVNGESGYFDRSLSAYGQEDRPCPRCGTAIRREKFMNRSSFSCPKCQPAPRRSLAKSSV.

Pro2 serves as the catalytic Schiff-base intermediate with DNA. Glu3 acts as the Proton donor in catalysis. Lys61 acts as the Proton donor; for beta-elimination activity in catalysis. Positions 96, 115, and 161 each coordinate DNA. An FPG-type zinc finger spans residues Ser247–Pro281. The active-site Proton donor; for delta-elimination activity is the Arg271.

Belongs to the FPG family. Monomer. Requires Zn(2+) as cofactor.

The enzyme catalyses Hydrolysis of DNA containing ring-opened 7-methylguanine residues, releasing 2,6-diamino-4-hydroxy-5-(N-methyl)formamidopyrimidine.. The catalysed reaction is 2'-deoxyribonucleotide-(2'-deoxyribose 5'-phosphate)-2'-deoxyribonucleotide-DNA = a 3'-end 2'-deoxyribonucleotide-(2,3-dehydro-2,3-deoxyribose 5'-phosphate)-DNA + a 5'-end 5'-phospho-2'-deoxyribonucleoside-DNA + H(+). Functionally, involved in base excision repair of DNA damaged by oxidation or by mutagenic agents. Acts as a DNA glycosylase that recognizes and removes damaged bases. Has a preference for oxidized purines, such as 7,8-dihydro-8-oxoguanine (8-oxoG). Has AP (apurinic/apyrimidinic) lyase activity and introduces nicks in the DNA strand. Cleaves the DNA backbone by beta-delta elimination to generate a single-strand break at the site of the removed base with both 3'- and 5'-phosphates. In Rhodococcus jostii (strain RHA1), this protein is Formamidopyrimidine-DNA glycosylase.